The sequence spans 107 residues: uncharacterized protein (107 aa).

Basic and acidic residues predominate over residues 88-97; that stretch reads EEKKEKDKGK. The interval 88–107 is disordered; the sequence is EEKKEKDKGKKGLLSRLKFW. Residues 98-107 show a composition bias toward basic residues; that stretch reads KGLLSRLKFW.

This is an uncharacterized protein from Methanocaldococcus jannaschii (strain ATCC 43067 / DSM 2661 / JAL-1 / JCM 10045 / NBRC 100440) (Methanococcus jannaschii).